Reading from the N-terminus, the 245-residue chain is MAQEEGGSLPEVRARVRAAHGIPDLAQKLHFYDRWAPDYDQDVATLLYRAPRLAVDCLTQALPGPPHSALILDVACGTGLVAAELRAPGFLQLHGVDGSPGMLEQAQAPGLYQRLSLCTLGQEPLPSPEGTFDAVLIVGALSDGQVPCNAIPELHVTKPGGLVCLTTRTNSSNLQYKEALEATLDRLEQAGMWEGLVAWPVDRLWTAGSWLPPSWRWYPASLPRMASSPALSTCTESGRRPRLRK.

This is Methyltransferase-like protein 27 from Homo sapiens (Human).